A 213-amino-acid polypeptide reads, in one-letter code: Orotidine 5'-phosphate decarboxylase (213 aa).

Substrate contacts are provided by residues Asp9, Lys31, Asp59 to Thr68, Ser115, Pro166 to Glu176, Gly191, and Arg192. Lys61 functions as the Proton donor in the catalytic mechanism.

It belongs to the OMP decarboxylase family. Type 1 subfamily. Homodimer.

The enzyme catalyses orotidine 5'-phosphate + H(+) = UMP + CO2. The protein operates within pyrimidine metabolism; UMP biosynthesis via de novo pathway; UMP from orotate: step 2/2. Functionally, catalyzes the decarboxylation of orotidine 5'-monophosphate (OMP) to uridine 5'-monophosphate (UMP). This Methanocaldococcus jannaschii (strain ATCC 43067 / DSM 2661 / JAL-1 / JCM 10045 / NBRC 100440) (Methanococcus jannaschii) protein is Orotidine 5'-phosphate decarboxylase.